The chain runs to 541 residues: Arginine--tRNA ligase (541 aa).

The short motif at 119–129 is the 'HIGH' region element; the sequence is ANPTGPLHIGH.

This sequence belongs to the class-I aminoacyl-tRNA synthetase family. Monomer.

It is found in the cytoplasm. It catalyses the reaction tRNA(Arg) + L-arginine + ATP = L-arginyl-tRNA(Arg) + AMP + diphosphate. This Helicobacter pylori (strain Shi470) protein is Arginine--tRNA ligase.